We begin with the raw amino-acid sequence, 377 residues long: dTDP-fucopyranose mutase (377 aa).

Residues S12, 31–32 (DD), N39, 58–59 (HI), R348, and 355–360 (LDMDVC) each bind FAD.

Belongs to the UDP-galactopyranose/dTDP-fucopyranose mutase family. Requires FAD as cofactor.

It carries out the reaction dTDP-alpha-D-fucose = dTDP-alpha-D-fucofuranose. It participates in bacterial outer membrane biogenesis; LPS O-antigen biosynthesis. With respect to regulation, inhibited by Cu(2+), while other divalent cations such as Ca(2+), Co(2+), Fe(2+) and Mg(2+) have no obvious effects on enzyme activity. Its function is as follows. Catalyzes the conversion of dTDP-alpha-D-fucopyranose to dTDP-alpha-D-fucofuranose. This is a step in the biosynthesis of D-fucofuranose, a component of E.coli O52 O antigen. The chain is dTDP-fucopyranose mutase (fcf2) from Escherichia coli.